An 868-amino-acid chain; its full sequence is LPS-assembly protein LptD (868 aa).

Residues 1 to 24 (MLKGIHKYLLMCFGTVLFTVQANA) form the signal peptide.

Belongs to the LptD family. In terms of assembly, component of the lipopolysaccharide transport and assembly complex. Interacts with LptE and LptA.

The protein localises to the cell outer membrane. Functionally, together with LptE, is involved in the assembly of lipopolysaccharide (LPS) at the surface of the outer membrane. This chain is LPS-assembly protein LptD, found in Francisella tularensis subsp. novicida (strain U112).